The sequence spans 230 residues: Large ribosomal subunit protein uL1 (230 aa).

This sequence belongs to the universal ribosomal protein uL1 family. As to quaternary structure, part of the 50S ribosomal subunit.

Its function is as follows. Binds directly to 23S rRNA. The L1 stalk is quite mobile in the ribosome, and is involved in E site tRNA release. Protein L1 is also a translational repressor protein, it controls the translation of the L11 operon by binding to its mRNA. The sequence is that of Large ribosomal subunit protein uL1 from Bifidobacterium longum (strain DJO10A).